Reading from the N-terminus, the 543-residue chain is Chaperonin GroEL 1 (543 aa).

ATP-binding positions include 29–32, 86–90, Gly413, 479–481, and Asp495; these read TLGP, DGTTT, and NAA. Residues 524–543 form a disordered region; sequence PEPKDAAPAGVGGGGGDFDY. A compositionally biased stretch (gly residues) spans 533–543; it reads GVGGGGGDFDY.

Belongs to the chaperonin (HSP60) family. Forms a cylinder of 14 subunits composed of two heptameric rings stacked back-to-back. Interacts with the co-chaperonin GroES.

It localises to the cytoplasm. The catalysed reaction is ATP + H2O + a folded polypeptide = ADP + phosphate + an unfolded polypeptide.. Functionally, together with its co-chaperonin GroES, plays an essential role in assisting protein folding. The GroEL-GroES system forms a nano-cage that allows encapsulation of the non-native substrate proteins and provides a physical environment optimized to promote and accelerate protein folding. The sequence is that of Chaperonin GroEL 1 from Anabaena sp. (strain L31).